Reading from the N-terminus, the 185-residue chain is Large ribosomal subunit protein uL5 (185 aa).

Belongs to the universal ribosomal protein uL5 family. In terms of assembly, part of the 50S ribosomal subunit; part of the 5S rRNA/L5/L18/L25 subcomplex. Contacts the 5S rRNA and the P site tRNA. Forms a bridge to the 30S subunit in the 70S ribosome.

In terms of biological role, this is one of the proteins that bind and probably mediate the attachment of the 5S RNA into the large ribosomal subunit, where it forms part of the central protuberance. In the 70S ribosome it contacts protein S13 of the 30S subunit (bridge B1b), connecting the 2 subunits; this bridge is implicated in subunit movement. Contacts the P site tRNA; the 5S rRNA and some of its associated proteins might help stabilize positioning of ribosome-bound tRNAs. This chain is Large ribosomal subunit protein uL5, found in Afipia carboxidovorans (strain ATCC 49405 / DSM 1227 / KCTC 32145 / OM5) (Oligotropha carboxidovorans).